Reading from the N-terminus, the 148-residue chain is uncharacterized protein (148 aa).

Residues 1–17 (MCPPVRQRPAQAPPAKR) show a composition bias toward low complexity. 2 disordered regions span residues 1–86 (MCPP…VQSP) and 122–148 (RAHRLPQPKPPCLSRQRPSPDSQTSPC). Residues 38–57 (RPPKMQRRPRPPVAKRRRFP) show a composition bias toward basic residues. Residues 137 to 148 (QRPSPDSQTSPC) show a composition bias toward polar residues.

Belongs to the Epstein-Barr virus BLLF2 family.

This is an uncharacterized protein from Epstein-Barr virus (strain AG876) (HHV-4).